The following is a 175-amino-acid chain: Adenine phosphoribosyltransferase (175 aa).

It belongs to the purine/pyrimidine phosphoribosyltransferase family. Homodimer.

The protein localises to the cytoplasm. The catalysed reaction is AMP + diphosphate = 5-phospho-alpha-D-ribose 1-diphosphate + adenine. It functions in the pathway purine metabolism; AMP biosynthesis via salvage pathway; AMP from adenine: step 1/1. Catalyzes a salvage reaction resulting in the formation of AMP, that is energically less costly than de novo synthesis. In Synechococcus sp. (strain CC9902), this protein is Adenine phosphoribosyltransferase.